We begin with the raw amino-acid sequence, 82 residues long: Cortexin-1 (82 aa).

The interval 1 to 20 (MSSAWTLSPEPLPPSTGPPV) is disordered. A helical transmembrane segment spans residues 30–50 (TVFAFVLCLLVVLVLLMVRCV).

This sequence belongs to the cortexin family.

It localises to the membrane. Functionally, may mediate extracellular or intracellular signaling of cortical neurons during forebrain development. In Mus musculus (Mouse), this protein is Cortexin-1 (Ctxn1).